The following is a 711-amino-acid chain: Polyribonucleotide nucleotidyltransferase (711 aa).

Residues D486 and D492 each contribute to the Mg(2+) site. The 60-residue stretch at 553–612 (PRIHTIKINPDKIKDVIGKGGSVIRALTEETGTTIEIEDDGTVKIAATDGEKAKHAIRRI) folds into the KH domain. In terms of domain architecture, S1 motif spans 622–690 (GRVYTGKVTR…RQGRIRLSIK (69 aa)). The segment at 689-711 (IKEATEQSQPAAAPEAPAAEQGE) is disordered. The segment covering 694–711 (EQSQPAAAPEAPAAEQGE) has biased composition (low complexity).

Belongs to the polyribonucleotide nucleotidyltransferase family. Component of the RNA degradosome, which is a multiprotein complex involved in RNA processing and mRNA degradation. Requires Mg(2+) as cofactor.

Its subcellular location is the cytoplasm. It carries out the reaction RNA(n+1) + phosphate = RNA(n) + a ribonucleoside 5'-diphosphate. Its function is as follows. Involved in mRNA degradation. Catalyzes the phosphorolysis of single-stranded polyribonucleotides processively in the 3'- to 5'-direction. The sequence is that of Polyribonucleotide nucleotidyltransferase from Shigella flexneri serotype 5b (strain 8401).